We begin with the raw amino-acid sequence, 433 residues long: B3 domain-containing protein Os04g0676600 (433 aa).

Disordered regions lie at residues 1–29 (MADTRGSTSSGGGDDRGREGHDDFTGGGQ) and 216–283 (FPPV…NSAN). The span at 13 to 24 (GDDRGREGHDDF) shows a compositional bias: basic and acidic residues. Residues 216–229 (FPPVSSSSRSFSSA) show a composition bias toward low complexity. Over residues 237–265 (DAKKAKKSDIKDQPIVLRRSDTESEKNDE) the composition is skewed to basic and acidic residues. Positions 269–283 (TPASEPSSMSHNSAN) are enriched in polar residues. The segment at residues 297-399 (LRKELTNSDV…KLVVRGEKAI (103 aa)) is a DNA-binding region (TF-B3).

It localises to the nucleus. Functionally, probable transcription regulator that binds specifically to the DNA sequence 5'-CATGC-3' of the IDE1 element found in the promoter of the barley iron deficiency-inducible gene IDS2. In Oryza sativa subsp. japonica (Rice), this protein is B3 domain-containing protein Os04g0676600.